The following is a 596-amino-acid chain: Probable tripeptidyl-peptidase SED2 (596 aa).

The N-terminal stretch at M1–A16 is a signal peptide. The propeptide at K17–A203 is removed in mature form. Residues L210 to P596 form the Peptidase S53 domain. A glycan (N-linked (GlcNAc...) asparagine) is linked at N265. Active-site charge relay system residues include E286 and D290. Residue N403 is glycosylated (N-linked (GlcNAc...) asparagine). The Charge relay system role is filled by S501. Residues D543 and I544 each contribute to the Ca(2+) site. N572 is a glycosylation site (N-linked (GlcNAc...) asparagine). Ca(2+) contacts are provided by G576 and D578.

Ca(2+) is required as a cofactor.

The protein resides in the secreted. The protein localises to the extracellular space. The enzyme catalyses Release of an N-terminal tripeptide from a polypeptide.. Functionally, secreted tripeptidyl-peptidase which degrades proteins at acidic pHs and is involved in virulence. This Trichophyton verrucosum (strain HKI 0517) protein is Probable tripeptidyl-peptidase SED2 (SED2).